Reading from the N-terminus, the 124-residue chain is Large ribosomal subunit protein uL14 (124 aa).

Belongs to the universal ribosomal protein uL14 family. Part of the 50S ribosomal subunit. Forms a cluster with proteins L3 and L19. In the 70S ribosome, L14 and L19 interact and together make contacts with the 16S rRNA in bridges B5 and B8.

Its function is as follows. Binds to 23S rRNA. Forms part of two intersubunit bridges in the 70S ribosome. In Clostridium novyi (strain NT), this protein is Large ribosomal subunit protein uL14.